We begin with the raw amino-acid sequence, 363 residues long: MSKTTIALLFGGKSTEHEISIISARSISGAIDRERYRVVPVYITHEGAWFSGDSAAEILSLDLSSIMRKSSVGNTETLLREMIRNSAEKPFDFNFRAAGIDVVFIALHGSYGEDGRVQGLLDTMGIPYTGCGVSASAIAMDKALTKLCAADAGVATAPSITLDADSYLADPEPVHELVDSTFGYPLFVKPASLGSSVGISKVHLPAALPEALKVACSYDRKILVEAAVSGKEIEVAVLGNDRPVASVPGEVEPGSDFYDFQDKYIHNTAKTFIPARLPDKLLDSVRCSAITVYKALGCRGMSRVDFFVNEENGSIVLNEINTIPGFTDISMYPKLFEASGIPFTALIDKLLHYAQEKPEAAGR.

In terms of domain architecture, ATP-grasp spans 146–352 (KLCAADAGVA…FTALIDKLLH (207 aa)). Residue 179-234 (DSTFGYPLFVKPASLGSSVGISKVHLPAALPEALKVACSYDRKILVEAAVSGKEIE) participates in ATP binding. Positions 305, 319, and 321 each coordinate Mg(2+).

It belongs to the D-alanine--D-alanine ligase family. The cofactor is Mg(2+). Mn(2+) serves as cofactor.

It localises to the cytoplasm. The catalysed reaction is 2 D-alanine + ATP = D-alanyl-D-alanine + ADP + phosphate + H(+). Its pathway is cell wall biogenesis; peptidoglycan biosynthesis. Cell wall formation. The protein is D-alanine--D-alanine ligase of Chlorobium limicola (strain DSM 245 / NBRC 103803 / 6330).